Consider the following 466-residue polypeptide: MPLNLLQDWCRGEHLNTQRSMLILGIPEDCSEDEFEETLHEALKHLGRYRIIGRMFRREENAQAFLVELARDFDYALVPREIEGKGGPWEVVVKPPHSDDEFLNRLNHFLEEERRTVSDMNRVLGTHSNHSPTKTTISADFWVWAQTLGAVMQPLLEQMLYRELRVFSGNTISIPGLLAFDSWLEHTTEMLQMWQVPEVEKRRRLMECLRGPALQVVNVLRANNAAITVKECLEALRQVFGSVDNRKIAQLKFCKAYQEPGEKVSSFVVRLETLLQKALEKNAISRKNVNQTRLKRILGGAILSAKLREKLKMLKQRRRPPGFLALVKLFREEEEEWEATRGSERSCYEGLELGPSPSNIGSEERELFVPAFGSVLEERPYQGSRRRRHRRRGQHRKGGVPRDDSQGTRKQNYDTFCYSCGEDGHIRVHCFNPSNRTLVKQKRQAAMEKGNRSWAWEKSHPKPKTK.

The segment at 379–408 (RPYQGSRRRRHRRRGQHRKGGVPRDDSQGT) is disordered. Basic residues predominate over residues 384–399 (SRRRRHRRRGQHRKGG). Residues 415-432 (TFCYSCGEDGHIRVHCFN) form a CCHC-type zinc finger. The segment at 441–466 (QKRQAAMEKGNRSWAWEKSHPKPKTK) is disordered. Basic and acidic residues predominate over residues 445 to 460 (AAMEKGNRSWAWEKSH).

Belongs to the PNMA family. In terms of tissue distribution, expressed in the cerebrum and cerebellum.

The protein resides in the nucleus. It localises to the nucleolus. In Mus musculus (Mouse), this protein is Paraneoplastic antigen Ma3 homolog (Pnma3).